Here is a 98-residue protein sequence, read N- to C-terminus: NADH-ubiquinone oxidoreductase chain 4L (98 aa).

3 helical membrane-spanning segments follow: residues 1 to 21, 29 to 49, and 61 to 81; these read MSLI…GLLM, ALLC…LTIL, and IILL…LVMI.

This sequence belongs to the complex I subunit 4L family. As to quaternary structure, core subunit of respiratory chain NADH dehydrogenase (Complex I) which is composed of 45 different subunits.

It localises to the mitochondrion inner membrane. The catalysed reaction is a ubiquinone + NADH + 5 H(+)(in) = a ubiquinol + NAD(+) + 4 H(+)(out). Its function is as follows. Core subunit of the mitochondrial membrane respiratory chain NADH dehydrogenase (Complex I) which catalyzes electron transfer from NADH through the respiratory chain, using ubiquinone as an electron acceptor. Part of the enzyme membrane arm which is embedded in the lipid bilayer and involved in proton translocation. The sequence is that of NADH-ubiquinone oxidoreductase chain 4L (MT-ND4L) from Berardius bairdii (Baird's beaked whale).